We begin with the raw amino-acid sequence, 154 residues long: Protein X (154 aa).

Positions 68 to 117 (PCALRFTSARRMETTVNAPWNLPTTLHKRTLGLSPRSTTWIEEYIKDCVF) are mitochondrial targeting sequence.

The protein belongs to the orthohepadnavirus protein X family. As to quaternary structure, may form homodimer. May interact with host CEBPA, CFLAR, CREB1, DDB1, E4F1, HBXIP, HSPD1/HSP60, NFKBIA, POLR2E and SMAD4. Interacts with host SMC5-SMC6 complex and induces its degradation. Interacts with host TRPC4AP; leading to prevent ubiquitination of TRPC4AP. Interacts with host PLSCR1; this interaction promotes ubiquitination and degradation of HBx and impairs HBx-mediated cell proliferation. In terms of processing, a fraction may be phosphorylated in insect cells and HepG2 cells, a human hepatoblastoma cell line. Phosphorylated in vitro by host protein kinase C or mitogen-activated protein kinase. N-acetylated in insect cells.

It is found in the host cytoplasm. It localises to the host nucleus. The protein resides in the host mitochondrion. Its function is as follows. Multifunctional protein that plays a role in silencing host antiviral defenses and promoting viral transcription. Does not seem to be essential for HBV infection. May be directly involved in development of cirrhosis and liver cancer (hepatocellular carcinoma). Most of cytosolic activities involve modulation of cytosolic calcium. The effect on apoptosis is controversial depending on the cell types in which the studies have been conducted. May induce apoptosis by localizing in mitochondria and causing loss of mitochondrial membrane potential. May also modulate apoptosis by binding host CFLAR, a key regulator of the death-inducing signaling complex (DISC). Promotes viral transcription by using the host E3 ubiquitin ligase DDB1 to target the SMC5-SMC6 complex to proteasomal degradation. This host complex would otherwise bind to viral episomal DNA, and prevents its transcription. Moderately stimulates transcription of many different viral and cellular transcription elements. Promoters and enhancers stimulated by HBx contain DNA binding sites for NF-kappa-B, AP-1, AP-2, c-EBP, ATF/CREB, or the calcium-activated factor NF-AT. This is Protein X from Homo sapiens (Human).